Consider the following 412-residue polypeptide: 23S rRNA (uracil(747)-C(5))-methyltransferase (412 aa).

Residues Cys63, Cys69, Cys72, and Cys139 each contribute to the [4Fe-4S] cluster site. Residues Gln255, Tyr281, Glu302, and Asp343 each coordinate S-adenosyl-L-methionine. The active-site Nucleophile is Cys369.

Belongs to the class I-like SAM-binding methyltransferase superfamily. RNA M5U methyltransferase family.

The catalysed reaction is uridine(747) in 23S rRNA + S-adenosyl-L-methionine = 5-methyluridine(747) in 23S rRNA + S-adenosyl-L-homocysteine + H(+). Functionally, catalyzes the formation of 5-methyl-uridine at position equivalent to 747 (m5U747) in 23S rRNA. In Pyrococcus horikoshii (strain ATCC 700860 / DSM 12428 / JCM 9974 / NBRC 100139 / OT-3), this protein is 23S rRNA (uracil(747)-C(5))-methyltransferase.